An 870-amino-acid chain; its full sequence is Leucine--tRNA ligase (870 aa).

The short motif at 43–53 (PYPSGRIHMGH) is the 'HIGH' region element. The 'KMSKS' region motif lies at 630–634 (KMSKS). Residue lysine 633 participates in ATP binding.

Belongs to the class-I aminoacyl-tRNA synthetase family.

It is found in the cytoplasm. It carries out the reaction tRNA(Leu) + L-leucine + ATP = L-leucyl-tRNA(Leu) + AMP + diphosphate. The polypeptide is Leucine--tRNA ligase (Parvibaculum lavamentivorans (strain DS-1 / DSM 13023 / NCIMB 13966)).